The primary structure comprises 195 residues: Glycerol-3-phosphate acyltransferase (195 aa).

Helical transmembrane passes span 2–22 (IFFS…SSAI), 54–74 (IAIS…WLGY), 80–100 (PIFL…PIFF), 107–127 (GVAT…IVMI), 132–152 (LTVL…FIIP), and 155–175 (AWHF…LVVI).

This sequence belongs to the PlsY family. As to quaternary structure, probably interacts with PlsX.

The protein resides in the cell inner membrane. The catalysed reaction is an acyl phosphate + sn-glycerol 3-phosphate = a 1-acyl-sn-glycero-3-phosphate + phosphate. The protein operates within lipid metabolism; phospholipid metabolism. Catalyzes the transfer of an acyl group from acyl-phosphate (acyl-PO(4)) to glycerol-3-phosphate (G3P) to form lysophosphatidic acid (LPA). This enzyme utilizes acyl-phosphate as fatty acyl donor, but not acyl-CoA or acyl-ACP. This Blochmanniella pennsylvanica (strain BPEN) protein is Glycerol-3-phosphate acyltransferase.